The following is a 736-amino-acid chain: Glycogen [starch] synthase, muscle (736 aa).

Ser8 bears the Phosphoserine; by AMPK and PKA mark. Ser11 carries the post-translational modification Phosphoserine. Lys39 contributes to the UDP binding site. His205 and Arg211 together coordinate UDP-alpha-D-glucose. His291, Glu292, Gln294, His297, and Lys301 together coordinate alpha-D-glucose 6-phosphate. Arg331 serves as a coordination point for UDP. Residue Arg331 participates in UDP-alpha-D-glucose binding. Position 412 is a phosphoserine (Ser412). His501 serves as a coordination point for alpha-D-glucose 6-phosphate. Positions 510, 512, and 513 each coordinate UDP-alpha-D-glucose. A UDP-binding site is contributed by Thr515. Positions 582 and 586 each coordinate alpha-D-glucose 6-phosphate. Positions 631–736 are disordered; sequence TQGYRYPRPA…PASSLGEERN (106 aa). Phosphoserine; by DYRK2, GSK3-alpha, GSK3-beta and PASK is present on Ser641. A phosphoserine; by GSK3-alpha and GSK3-beta mark is found at Ser645 and Ser649. Ser652 bears the Phosphoserine mark. A Phosphoserine; by GSK3-alpha and GSK3-beta modification is found at Ser653. At Ser657 the chain carries Phosphoserine; by CK2. Residues 658–681 show a composition bias toward acidic residues; it reads EDEEEPRDLPPDEDDERYDEDEEA. The span at 682 to 695 shows a compositional bias: basic and acidic residues; that stretch reads AKDRRNIRAPEWPR. A Phosphoserine modification is found at Ser698. At Thr700 the chain carries Phosphothreonine. The residue at position 709 (Ser709) is a Phosphoserine. Positions 714–727 are enriched in low complexity; that stretch reads PSSSVSTPSEPLSP. Position 720 is a phosphothreonine (Thr720). A phosphoserine mark is found at Ser726 and Ser730.

This sequence belongs to the glycosyltransferase 3 family. As to quaternary structure, part of the GYS1-GYG1 complex, a heterooctamer composed of a tetramer of GYS1 and 2 dimers of GYG1, where each GYS1 protomer binds to one GYG1 subunit (via GYG1 C-terminus); the GYS1 tetramer may dissociate from GYG1 dimers to continue glycogen polymerization on its own. Phosphorylation at Ser-8 by AMPK inactivates the enzyme activity. Primed phosphorylation at Ser-657 (site 5) by CSNK2A1 and CSNK2A2 is required for inhibitory phosphorylation at Ser-641 (site 3a), Ser-645 (site 3b), Ser-649 (site 3c) and Ser-653 (site 4) by GSK3A an GSK3B. Phosphorylated at Ser-641 by PASK, leading to inactivation; phosphorylation by PASK is inhibited by glycogen. Phosphorylated at Ser-641 by DYRK2, leading to inactivation. Dephosphorylation at Ser-641 and Ser-645 by PP1 activates the enzyme.

The enzyme catalyses [(1-&gt;4)-alpha-D-glucosyl](n) + UDP-alpha-D-glucose = [(1-&gt;4)-alpha-D-glucosyl](n+1) + UDP + H(+). Its pathway is glycan biosynthesis; glycogen biosynthesis. Its activity is regulated as follows. Allosteric activation by glucose-6-phosphate. Phosphorylation reduces the activity towards UDP-glucose. When in the non-phosphorylated state, glycogen synthase does not require glucose-6-phosphate as an allosteric activator; when phosphorylated it does. Its function is as follows. Glycogen synthase participates in the glycogen biosynthetic process along with glycogenin and glycogen branching enzyme. Extends the primer composed of a few glucose units formed by glycogenin by adding new glucose units to it. In this context, glycogen synthase transfers the glycosyl residue from UDP-Glc to the non-reducing end of alpha-1,4-glucan. This chain is Glycogen [starch] synthase, muscle (GYS1), found in Bos taurus (Bovine).